We begin with the raw amino-acid sequence, 301 residues long: Phosducin-like protein (301 aa).

Thr-2 bears the N-acetylthreonine mark. Positions 15-53 are disordered; it reads YYYSSSEEEDSDHEDKDRGRGALAGSSMPADADLAGEGI. Phosphoserine is present on residues Ser-20, Ser-25, Ser-226, Ser-293, and Ser-296. The Phosducin domain maps to 37–299; sequence LAGSSMPADA…TCHSEDSDLE (263 aa). The interval 158-301 is thioredoxin fold; it reads FKQVFEIPSG…HSEDSDLEID (144 aa).

It belongs to the phosducin family. As to quaternary structure, forms a complex with the beta and gamma subunits of the GTP-binding protein, transducin. Interacts with the CCT chaperonin complex.

Its subcellular location is the cell projection. The protein localises to the cilium. Functions as a co-chaperone for CCT in the assembly of heterotrimeric G protein complexes, facilitates the assembly of both Gbeta-Ggamma and RGS-Gbeta5 heterodimers. Also acts as a positive regulator of hedgehog signaling and regulates ciliary function. The chain is Phosducin-like protein (PDCL) from Bos taurus (Bovine).